We begin with the raw amino-acid sequence, 472 residues long: MADMRNLVERLERVVGRLEAVSHASDTHCGYGDSAAKAGTTPYVQAFDSLLAGPVAEYLKISKEIGGDVQKHAEMVHTGLKLERALLVTASQCQQPAGNKLSDLLAPISEQIQEVVTFREKNRGSKLFNHLSAVSESIQALGWVAMAPKPGPYVKEMNDAAMFYTNRVLKEYKDVDKKHVDWVKAYLSIWTELQAYIKEFHTTGLAWSRTGPVAKELSGLPSGPSAGSGPPPPPPGPPPPPVPTSSGSDDSASRSALFAQINQGESITHALKHVSDDMKTHKNPALKAQSGLIRSGPKPFSASKPDPPKPVAKKEPALLELEGKKWRVENQENVSNLMIEDTELKQVAYIFKCVNSTLQIKGKINSITVDNCKKLGLVFDDVVGIVEIINSKDVKVQVMGKVPTISINKTDGCHVYLSKNSLDCEIVSAKSSEMNVLIPTEGGDFNEFPVPEQFKTLWNGQKLVTTVTEIAG.

Ala-2 is subject to N-acetylalanine. Tyr-31 is subject to Phosphotyrosine. Ser-34 carries the phosphoserine modification. Lys-81 carries the N6-acetyllysine modification. The tract at residues 216 to 253 is disordered; the sequence is ELSGLPSGPSAGSGPPPPPPGPPPPPVPTSSGSDDSAS. Residues 218 to 228 show a composition bias toward low complexity; it reads SGLPSGPSAGS. Positions 229-243 are enriched in pro residues; it reads GPPPPPPGPPPPPVP. Low complexity predominate over residues 244-253; that stretch reads TSSGSDDSAS. Lys-287 bears the N6-methyllysine mark. 3 positions are modified to phosphoserine: Ser-290, Ser-295, and Ser-301. The interval 290–312 is disordered; the sequence is SGLIRSGPKPFSASKPDPPKPVA. The 144-residue stretch at 307–450 folds into the C-CAP/cofactor C-like domain; sequence PPKPVAKKEP…EGGDFNEFPV (144 aa). A Glycyl lysine isopeptide (Lys-Gly) (interchain with G-Cter in SUMO1) cross-link involves residue Lys-345.

The protein belongs to the CAP family. Homodimer. Binds actin monomers.

The protein resides in the cell membrane. In terms of biological role, directly regulates filament dynamics and has been implicated in a number of complex developmental and morphological processes, including mRNA localization and the establishment of cell polarity. In Bos taurus (Bovine), this protein is Adenylyl cyclase-associated protein 1 (CAP1).